Here is a 698-residue protein sequence, read N- to C-terminus: Protein CRAC (698 aa).

Residues 22–122 enclose the PH domain; it reads DVSYSSIMKK…FLTLLIARIR (101 aa). Residues 594-630 are disordered; the sequence is TGGGSVPSSQSTNNLQSSTSSMSSLSSSSTSTTKRSH. A compositionally biased stretch (low complexity) spans 601–626; that stretch reads SSQSTNNLQSSTSSMSSLSSSSTSTT.

It is found in the cytoplasm. Couples activated G protein to adenylyl cyclase signal transduction from surface cAMP receptor. Pianissimo a cytosolic regulator and CRAC, are both essential for activation of the enzyme adenylyl cyclase. Pianissimo and CRAC do not function redundantly. Both proteins are integral components of the adenylyl cyclase activation pathway. The sequence is that of Protein CRAC (dagA) from Dictyostelium discoideum (Social amoeba).